The chain runs to 394 residues: Probable 6-phosphogluconolactonase ARB_02015 (394 aa).

The first 21 residues, 1–21, serve as a signal peptide directing secretion; the sequence is MKTVPFLSLLQAGILTSGIVA. The N-linked (GlcNAc...) asparagine glycan is linked to Asn-51.

Belongs to the cycloisomerase 2 family.

It localises to the secreted. The catalysed reaction is 6-phospho-D-glucono-1,5-lactone + H2O = 6-phospho-D-gluconate + H(+). It participates in carbohydrate degradation; pentose phosphate pathway; D-ribulose 5-phosphate from D-glucose 6-phosphate (oxidative stage): step 2/3. Its function is as follows. Catalyzes the hydrolysis of 6-phosphogluconolactone to 6-phosphogluconate. The protein is Probable 6-phosphogluconolactonase ARB_02015 of Arthroderma benhamiae (strain ATCC MYA-4681 / CBS 112371) (Trichophyton mentagrophytes).